A 2924-amino-acid polypeptide reads, in one-letter code: Probable polyketide synthase 6 (2924 aa).

The Ketosynthase family 3 (KS3) domain maps to 11–442 (EKGVAIVGIG…GSNCCLLISE (432 aa)). Catalysis depends on for beta-ketoacyl synthase activity residues Cys181, His323, and His362. The interval 635 to 668 (GVNPSFILGHSLGEISASYCSGMIDLDTFCYTVY) is acyl/malonyl transferase. Ser645 serves as the catalytic For acyl/malonyl transferase activity. The segment at 925-1047 (IDHLGLSNSY…SNFQLLDHGN (123 aa)) is N-terminal hotdog fold. In terms of domain architecture, PKS/mFAS DH spans 925-1210 (IDHLGLSNSY…CKSLIPIKDS (286 aa)). The active-site Proton acceptor; for dehydratase activity is the His959. The tract at residues 1064–1210 (NLSKLTKNEL…CKSLIPIKDS (147 aa)) is C-terminal hotdog fold. Asp1122 functions as the Proton donor; for dehydratase activity in the catalytic mechanism. Residues 2431–2508 (TGNKNIDELF…ISIKMILNSL (78 aa)) enclose the Carrier domain. Position 2468 is an O-(pantetheine 4'-phosphoryl)serine (Ser2468). The helical transmembrane segment at 2551 to 2571 (KIILLTGTTGFLGGFLLFNML) threads the bilayer.

It depends on pantetheine 4'-phosphate as a cofactor.

It is found in the membrane. Functionally, probable polyketide synthase. The protein is Probable polyketide synthase 6 (pks6) of Dictyostelium discoideum (Social amoeba).